The following is a 336-amino-acid chain: Protein-arginine N-acetylglucosaminyltransferase SseK1 (336 aa).

Arg24 carries N-beta-linked (GlcNAc) arginine; by autocatalysis glycosylation. Residues 50–52 (QWF) and Tyr74 each bind UDP-N-acetyl-alpha-D-glucosamine. An N-beta-linked (GlcNAc) arginine; by autocatalysis glycan is attached at Arg152. The DXD motif motif lies at 223-225 (DAD). A UDP-N-acetyl-alpha-D-glucosamine-binding site is contributed by 224-225 (AD). Mn(2+) is bound at residue Asp225. Glu255 serves as the catalytic Proton acceptor. The Mn(2+) site is built by Asn322 and Ser324. Residues Ser324 and Ser329 each contribute to the UDP-N-acetyl-alpha-D-glucosamine site. N-beta-linked (GlcNAc) arginine; by autocatalysis glycosylation occurs at Arg333.

It belongs to the glycosyltransferase NleB family. Mn(2+) is required as a cofactor. Auto-glycosylated: arginine GlcNAcylation is required for activity toward death domain-containing host target proteins.

Its subcellular location is the secreted. The protein resides in the host cytoplasm. It localises to the host cytosol. The catalysed reaction is L-arginyl-[protein] + UDP-N-acetyl-alpha-D-glucosamine = N(omega)-(N-acetyl-beta-D-glucosaminyl)-L-arginyl-[protein] + UDP + H(+). Protein-arginine N-acetylglucosaminyltransferase activity is inhibited by 100066N compound (flavone analog) and 102644N compound (a substituted isoxazole). In terms of biological role, protein-arginine N-acetylglucosaminyltransferase effector that disrupts TNF signaling in infected cells, including NF-kappa-B signaling, apoptosis and necroptosis. Acts by catalyzing the transfer of a single N-acetylglucosamine (GlcNAc) to a conserved arginine residue in the death domain of host proteins TRADD and, to a lower extent, FADD: arginine GlcNAcylation prevents homotypic/heterotypic death domain interactions and assembly of the oligomeric TNF-alpha receptor complex, thereby disrupting TNF signaling. Also acts on host proteins without a death domain: catalyzes arginine GlcNAcylation of host GAPDH protein, thereby preventing GAPDH interaction with TRAF2, leading to inhibit NF-kappa-B signaling. Catalyzes GlcNAcylation of host tubulin-folding cofactor TBCB, thereby promoting microtubule stability. Also mediates auto-GlcNAcylation, which is required for activity toward death domain-containing host target proteins. In Salmonella enteritidis (strain 2009K0958), this protein is Protein-arginine N-acetylglucosaminyltransferase SseK1.